The sequence spans 305 residues: Homoserine O-succinyltransferase (305 aa).

The active-site Acyl-thioester intermediate is the cysteine 142. Substrate is bound by residues lysine 163 and serine 192. Catalysis depends on histidine 235, which acts as the Proton acceptor. Glutamate 237 is an active-site residue. Substrate is bound at residue arginine 249.

It belongs to the MetA family.

It is found in the cytoplasm. It catalyses the reaction L-homoserine + succinyl-CoA = O-succinyl-L-homoserine + CoA. The protein operates within amino-acid biosynthesis; L-methionine biosynthesis via de novo pathway; O-succinyl-L-homoserine from L-homoserine: step 1/1. Transfers a succinyl group from succinyl-CoA to L-homoserine, forming succinyl-L-homoserine. In Psychromonas ingrahamii (strain DSM 17664 / CCUG 51855 / 37), this protein is Homoserine O-succinyltransferase.